The sequence spans 642 residues: Mini-chromosome maintenance complex-binding protein (642 aa).

A compositionally biased stretch (polar residues) spans 151 to 161 (ARVSPSTSYTP). Positions 151–197 (ARVSPSTSYTPSRHKRSYEDDDDMDLQPNKQKDQHAGARQAGSVGGL) are disordered. S154 is modified (phosphoserine). T160 carries the phosphothreonine modification. 2 positions are modified to phosphoserine: S167 and S298.

Belongs to the MCMBP family. As to quaternary structure, interacts with the MCM complex: associates with the MCM3-7 complex which lacks MCM2, while it does not interact with the MCM complex when MCM2 is present (MCM2-7 complex). Interacts with the RPA complex, when composed of all RPA1, RPA2 and RPA3 components, but not with RPA1 or RPA2 alone.

It localises to the nucleus. In terms of biological role, associated component of the MCM complex that acts as a regulator of DNA replication. Binds to the MCM complex during late S phase and promotes the disassembly of the MCM complex from chromatin, thereby acting as a key regulator of pre-replication complex (pre-RC) unloading from replicated DNA. Can dissociate the MCM complex without addition of ATP; probably acts by destabilizing interactions of each individual subunits of the MCM complex. Required for sister chromatid cohesion. This Homo sapiens (Human) protein is Mini-chromosome maintenance complex-binding protein (MCMBP).